The chain runs to 203 residues: GTP cyclohydrolase-2 (203 aa).

49–53 (RIHSE) is a GTP binding site. Residues C54, C65, and C67 each coordinate Zn(2+). GTP is bound by residues Q70, 92–94 (EGR), and T114. D126 acts as the Proton acceptor in catalysis. R128 serves as the catalytic Nucleophile. GTP is bound by residues T149 and K154.

It belongs to the GTP cyclohydrolase II family. Zn(2+) is required as a cofactor.

It catalyses the reaction GTP + 4 H2O = 2,5-diamino-6-hydroxy-4-(5-phosphoribosylamino)-pyrimidine + formate + 2 phosphate + 3 H(+). It functions in the pathway cofactor biosynthesis; riboflavin biosynthesis; 5-amino-6-(D-ribitylamino)uracil from GTP: step 1/4. Functionally, catalyzes the conversion of GTP to 2,5-diamino-6-ribosylamino-4(3H)-pyrimidinone 5'-phosphate (DARP), formate and pyrophosphate. This is GTP cyclohydrolase-2 from Shewanella oneidensis (strain ATCC 700550 / JCM 31522 / CIP 106686 / LMG 19005 / NCIMB 14063 / MR-1).